Reading from the N-terminus, the 170-residue chain is Urease accessory protein UreE (170 aa).

The interval 137 to 170 (PFDPESGAYAHAGREQSHAHSHEHSHADGHTHAH) is disordered. A compositionally biased stretch (basic and acidic residues) spans 148-170 (AGREQSHAHSHEHSHADGHTHAH).

This sequence belongs to the UreE family.

It is found in the cytoplasm. Involved in urease metallocenter assembly. Binds nickel. Probably functions as a nickel donor during metallocenter assembly. In Pseudoalteromonas translucida (strain TAC 125), this protein is Urease accessory protein UreE.